The primary structure comprises 106 residues: Phosphoribosyl-ATP pyrophosphatase (106 aa).

The protein belongs to the PRA-PH family.

The protein localises to the cytoplasm. The catalysed reaction is 1-(5-phospho-beta-D-ribosyl)-ATP + H2O = 1-(5-phospho-beta-D-ribosyl)-5'-AMP + diphosphate + H(+). Its pathway is amino-acid biosynthesis; L-histidine biosynthesis; L-histidine from 5-phospho-alpha-D-ribose 1-diphosphate: step 2/9. In Lactiplantibacillus plantarum (strain ATCC BAA-793 / NCIMB 8826 / WCFS1) (Lactobacillus plantarum), this protein is Phosphoribosyl-ATP pyrophosphatase.